Reading from the N-terminus, the 301-residue chain is Ribosome-inactivating protein (301 aa).

Positions 1-16 (MAEITLEPSDLMAQTN) are cleaved as a propeptide — or 12 (in 10% of the molecules). A propeptide spanning residues 162–186 (MATLEEEEVKMQMQMPEAADLAAAA) is cleaved from the precursor. The active site involves Glu-207. A propeptide spanning residues 258–301 (VIPDMQKLGIKDKNEAARIVALVKNQTTAAAATAASADNDDDEA) is cleaved from the precursor.

It belongs to the ribosome-inactivating protein family. Type 1 RIP subfamily. As to quaternary structure, synthesized and stored in the kernel as a 34 kDa inactive precursor. During germination, this neutral precursor is converted into a basic, active form by limited proteolysis, which removes 25 AA of net charge -6 from the center of the polypeptide chain. Additional processing also occurs at the N- and C-termini of the polypeptide. A two-chain active RIP (comprised of 16.5 and 8.5 kDa fragments that remain tightly associated) is produced from this processing event.

It carries out the reaction Endohydrolysis of the N-glycosidic bond at one specific adenosine on the 28S rRNA.. In terms of biological role, potent catalytic inactivator of eukaryotic protein synthesis. It may be a component of natural defense mechanisms involved in protecting the kernel against soil-borne fungal infections. The polypeptide is Ribosome-inactivating protein (Zea mays (Maize)).